A 341-amino-acid chain; its full sequence is UDP-3-O-acylglucosamine N-acyltransferase (341 aa).

Residue H239 is the Proton acceptor of the active site.

The protein belongs to the transferase hexapeptide repeat family. LpxD subfamily. Homotrimer.

It catalyses the reaction a UDP-3-O-[(3R)-3-hydroxyacyl]-alpha-D-glucosamine + a (3R)-hydroxyacyl-[ACP] = a UDP-2-N,3-O-bis[(3R)-3-hydroxyacyl]-alpha-D-glucosamine + holo-[ACP] + H(+). The protein operates within bacterial outer membrane biogenesis; LPS lipid A biosynthesis. Its function is as follows. Catalyzes the N-acylation of UDP-3-O-acylglucosamine using 3-hydroxyacyl-ACP as the acyl donor. Is involved in the biosynthesis of lipid A, a phosphorylated glycolipid that anchors the lipopolysaccharide to the outer membrane of the cell. This is UDP-3-O-acylglucosamine N-acyltransferase from Shewanella sp. (strain MR-4).